Reading from the N-terminus, the 351-residue chain is Biotin synthase (351 aa).

The Radical SAM core domain maps to 44–262; it reads NRVQVSTLLS…LAVARILMPQ (219 aa). [4Fe-4S] cluster-binding residues include Cys59, Cys63, and Cys66. Cys103, Cys134, Cys194, and Arg266 together coordinate [2Fe-2S] cluster.

It belongs to the radical SAM superfamily. Biotin synthase family. As to quaternary structure, homodimer. The cofactor is [4Fe-4S] cluster. [2Fe-2S] cluster is required as a cofactor.

It carries out the reaction (4R,5S)-dethiobiotin + (sulfur carrier)-SH + 2 reduced [2Fe-2S]-[ferredoxin] + 2 S-adenosyl-L-methionine = (sulfur carrier)-H + biotin + 2 5'-deoxyadenosine + 2 L-methionine + 2 oxidized [2Fe-2S]-[ferredoxin]. The protein operates within cofactor biosynthesis; biotin biosynthesis; biotin from 7,8-diaminononanoate: step 2/2. Catalyzes the conversion of dethiobiotin (DTB) to biotin by the insertion of a sulfur atom into dethiobiotin via a radical-based mechanism. This chain is Biotin synthase, found in Pseudomonas fluorescens (strain Pf0-1).